Reading from the N-terminus, the 445-residue chain is Exodeoxyribonuclease 7 large subunit (445 aa).

It belongs to the XseA family. Heterooligomer composed of large and small subunits.

Its subcellular location is the cytoplasm. The enzyme catalyses Exonucleolytic cleavage in either 5'- to 3'- or 3'- to 5'-direction to yield nucleoside 5'-phosphates.. Bidirectionally degrades single-stranded DNA into large acid-insoluble oligonucleotides, which are then degraded further into small acid-soluble oligonucleotides. This is Exodeoxyribonuclease 7 large subunit from Xanthomonas axonopodis pv. citri (strain 306).